The primary structure comprises 219 residues: 7-cyano-7-deazaguanine synthase (219 aa).

8–18 (LSGGMDSAVLL) serves as a coordination point for ATP. 4 residues coordinate Zn(2+): cysteine 185, cysteine 193, cysteine 196, and cysteine 199.

The protein belongs to the QueC family. Zn(2+) is required as a cofactor.

It carries out the reaction 7-carboxy-7-deazaguanine + NH4(+) + ATP = 7-cyano-7-deazaguanine + ADP + phosphate + H2O + H(+). The protein operates within purine metabolism; 7-cyano-7-deazaguanine biosynthesis. In terms of biological role, catalyzes the ATP-dependent conversion of 7-carboxy-7-deazaguanine (CDG) to 7-cyano-7-deazaguanine (preQ(0)). The polypeptide is 7-cyano-7-deazaguanine synthase (Desulfotalea psychrophila (strain LSv54 / DSM 12343)).